The chain runs to 65 residues: Large ribosomal subunit protein bL35 (65 aa).

Basic residues predominate over residues 1-16; the sequence is MPKQKTHRASAKRFKR. The tract at residues 1–20 is disordered; that stretch reads MPKQKTHRASAKRFKRTGSG.

It belongs to the bacterial ribosomal protein bL35 family.

The protein is Large ribosomal subunit protein bL35 of Streptococcus equi subsp. equi (strain 4047).